A 330-amino-acid polypeptide reads, in one-letter code: Ornithine carbamoyltransferase (330 aa).

Carbamoyl phosphate is bound by residues 57 to 60 (STRT), Gln-84, Arg-108, and 135 to 138 (HPTQ). L-ornithine-binding positions include Asn-168, Asp-232, and 236-237 (SM). Residues 273-274 (CL) and Arg-318 contribute to the carbamoyl phosphate site.

The protein belongs to the aspartate/ornithine carbamoyltransferase superfamily. OTCase family.

The protein localises to the cytoplasm. It carries out the reaction carbamoyl phosphate + L-ornithine = L-citrulline + phosphate + H(+). It participates in amino-acid biosynthesis; L-arginine biosynthesis; L-arginine from L-ornithine and carbamoyl phosphate: step 1/3. Reversibly catalyzes the transfer of the carbamoyl group from carbamoyl phosphate (CP) to the N(epsilon) atom of ornithine (ORN) to produce L-citrulline. This Alkaliphilus metalliredigens (strain QYMF) protein is Ornithine carbamoyltransferase.